The chain runs to 561 residues: MMTAESRETTGLSPQAAQEKDGIVIVKVEEEDEEDHMWGQDSSLQETPPPDPEVFRQRFRRFCYQNTFGPREALNRLKELCHQWLRPEVNSKEQILELLVLEQFLSILPKELQVWLQEYRPDSGEEAVTLLEDLELDLSGQQVPGQVHGPEMLARGVVPLDPVQESSSFDHHETAQSHFKHSSRKPRLLSRALPATHVPAPHHEGNPRDQAMASALLTADSQAMVKIEDMAVSLILEEWGCQNLARRNLNRDSRQMNLGNVFSQGSENRNGNESTSKAEVKEDSTSHGEIAGRFQKEFGEKREQQGRVVERQQKNPEEKTGKEKKEPGPPTAKEKKPSTGERGPREKGKGLGRSFSLSANFNNTPEEAPSGAKTHRCDECGKCFTRSSSLIRHKIIHTGEKPYECNECGKAFSLNSNLVLHQRIHTGEKPHECNECGKAFSHSSNLILHQRIHSGEKPYECNECGKAFSQSSDLTKHQRIHTGEKPYECSECGKAFNRNSYLILHRRIHTREKPYKCTKCGKAFTRSSTLTLHHRIHARERTSEYSPASLDAFGAFLKSCV.

Residues 1-51 form a disordered region; the sequence is MMTAESRETTGLSPQAAQEKDGIVIVKVEEEDEEDHMWGQDSSLQETPPPD. A Phosphoserine modification is found at Ser-13. Lys-27 participates in a covalent cross-link: Glycyl lysine isopeptide (Lys-Gly) (interchain with G-Cter in SUMO2). An SCAN box domain is found at 56 to 138; that stretch reads RQRFRRFCYQ…TLLEDLELDL (83 aa). The tract at residues 163–187 is disordered; it reads VQESSSFDHHETAQSHFKHSSRKPR. Residues 178-187 show a composition bias toward basic residues; the sequence is HFKHSSRKPR. Residues Lys-180 and Lys-226 each participate in a glycyl lysine isopeptide (Lys-Gly) (interchain with G-Cter in SUMO2) cross-link. The KRAB domain occupies 225 to 304; it reads VKIEDMAVSL…QKEFGEKREQ (80 aa). Over residues 260 to 275 the composition is skewed to polar residues; it reads NVFSQGSENRNGNEST. The tract at residues 260 to 372 is disordered; sequence NVFSQGSENR…NTPEEAPSGA (113 aa). 2 stretches are compositionally biased toward basic and acidic residues: residues 276–286 and 294–349; these read SKAEVKEDSTS and FQKE…EKGK. Glycyl lysine isopeptide (Lys-Gly) (interchain with G-Cter in SUMO2) cross-links involve residues Lys-277, Lys-296, Lys-301, and Lys-336. Residues 355–365 are compositionally biased toward polar residues; it reads FSLSANFNNTP. A Glycyl lysine isopeptide (Lys-Gly) (interchain with G-Cter in SUMO2) cross-link involves residue Lys-373. C2H2-type zinc fingers lie at residues 375–397, 403–425, 431–453, 459–481, 487–509, and 515–537; these read HRCD…KIIH, YECN…QRIH, HECN…QRIH, YECS…RRIH, and YKCT…HRIH. Residues Lys-410, Lys-438, and Lys-476 each participate in a glycyl lysine isopeptide (Lys-Gly) (interchain with G-Cter in SUMO2) cross-link. Lys-558 participates in a covalent cross-link: Glycyl lysine isopeptide (Lys-Gly) (interchain with G-Cter in SUMO2).

Belongs to the krueppel C2H2-type zinc-finger protein family.

It localises to the nucleus. In terms of biological role, may be involved in transcriptional regulation. In Mus musculus (Mouse), this protein is Zinc finger protein with KRAB and SCAN domains 1 (Zkscan1).